We begin with the raw amino-acid sequence, 420 residues long: 4-hydroxy-3-methylbut-2-en-1-yl diphosphate synthase (flavodoxin) (420 aa).

[4Fe-4S] cluster contacts are provided by Cys307, Cys310, Cys353, and Glu360.

This sequence belongs to the IspG family. The cofactor is [4Fe-4S] cluster.

The catalysed reaction is (2E)-4-hydroxy-3-methylbut-2-enyl diphosphate + oxidized [flavodoxin] + H2O + 2 H(+) = 2-C-methyl-D-erythritol 2,4-cyclic diphosphate + reduced [flavodoxin]. The protein operates within isoprenoid biosynthesis; isopentenyl diphosphate biosynthesis via DXP pathway; isopentenyl diphosphate from 1-deoxy-D-xylulose 5-phosphate: step 5/6. In terms of biological role, converts 2C-methyl-D-erythritol 2,4-cyclodiphosphate (ME-2,4cPP) into 1-hydroxy-2-methyl-2-(E)-butenyl 4-diphosphate. This chain is 4-hydroxy-3-methylbut-2-en-1-yl diphosphate synthase (flavodoxin), found in Brucella suis (strain ATCC 23445 / NCTC 10510).